We begin with the raw amino-acid sequence, 500 residues long: Neuronal acetylcholine receptor subunit beta-2 (500 aa).

Residues methionine 1–glycine 24 form the signal peptide. Topologically, residues threonine 25–threonine 237 are extracellular. 2 N-linked (GlcNAc...) asparagine glycosylation sites follow: asparagine 50 and asparagine 167. A disulfide bridge links cysteine 154 with cysteine 168. Residues isoleucine 238–proline 258 traverse the membrane as a helical segment. Topologically, residues serine 259 to threonine 266 are cytoplasmic. The helical transmembrane segment at leucine 267 to proline 287 threads the bilayer. Over proline 288 to tyrosine 299 the chain is Extracellular. The chain crosses the membrane as a helical span at residues leucine 300 to valine 320. The Cytoplasmic portion of the chain corresponds to histidine 321–arginine 458. The chain crosses the membrane as a helical span at residues leucine 459 to proline 479.

The protein belongs to the ligand-gated ion channel (TC 1.A.9) family. Acetylcholine receptor (TC 1.A.9.1) subfamily. Beta-2/CHRNB2 sub-subfamily. As to quaternary structure, neuronal AChR is a heteropentamer composed of two different types of subunits: alpha and beta. CHRNB2/Beta-2 subunit can be combined to CHRNA2/alpha-2, CHRNA3/alpha-3 or CHRNA4/alpha-4, CHRNA5/alpha-5, CHRNA6/alpha-6 and CHRNB3/beta-3 to give rise to functional receptors. CHRNA2:CHRNB2 and CHRNA4:CHRNB2 nAChR complexes exist in two subtypes: LS (low agonist sensitivity) with a (CHRNA2/4)3:(CHRNB2)2 and HS (high agonist sensitivity) with a (CHRNA2/4)2:(CHRNB2)3 stoichiometry; the subtypes differ in their subunit binding interfaces which are involved in ligand binding. Cells produce predominantly an (CHRNA4)3:(CHRNB2)2 nAChR. The stoichiometric form (CHRNA4)2:(CHRNB2)3 expression is selectively up-regulated by nicotine and has lower single channel conductance and calcium permeability. Also part of the stoichiometric forms: (CHRNA4:CHRNB2)2:CHRNB3 or (CHRNA6:CHRNB2)2:CHRNB3. Can form heteropentamers with CHRNA7, mainly found in basal forebrain cholinergic neurons. Interacts with RIC3; which is required for proper folding and assembly. Interacts with LYPD6. Expressed in most regions of the CNS.

The protein resides in the synaptic cell membrane. The protein localises to the cell membrane. The enzyme catalyses Ca(2+)(in) = Ca(2+)(out). The catalysed reaction is K(+)(in) = K(+)(out). It catalyses the reaction Na(+)(in) = Na(+)(out). With respect to regulation, activated by a myriad of ligands such as acetylcholine, cytisine, nicotine, choline and epibatidine. Channel potentiation by calcium is stoichiometry-selective, CHRNA4:CHRNB2 nACh receptor is achieved by calcium association with topographically distinct sites framed by anionic residues within the CHRNA4 subunit and between the CHRNA4 and CHRNB2 subunits. Oligomeric amyloid-beta protein 42 activates specifially CHRNA7:CHRNB2 nAchRs. nAChR activity is inhibited by the antagonist alpha-conotoxins BuIA, PnIA, PnIC, GID and MII, small disulfide-constrained peptides from cone snails. Component of neuronal acetylcholine receptors (nAChRs) that function as pentameric, ligand-gated cation channels with high calcium permeability among other activities. nAChRs are excitatory neurotrasnmitter receptors formed by a collection of nAChR subunits known to mediate synaptic transmission in the nervous system and the neuromuscular junction. Each nAchR subunit confers differential attributes to channel properties, including activation, deactivation and desensitization kinetics, pH sensitivity, cation permeability, and binding to allosteric modulators. CHRNB2 forms heteropentameric neuronal acetylcholine receptors with CHRNA2, CHRNA3, CHRNA4 and CHRNA6, as well as CHRNA5 and CHRNB3 as accesory subunits. Found in two major stoichiometric forms,(CHRNA4)3:(CHRNB2)2 and (CHRNA4)2:(CHRNB2)3, the two stoichiometric forms differ in their unitary conductance, calcium permeability, ACh sensitivity and potentiation by divalent cation. Heteropentameric channels with CHRNA6 and CHRNA4 exhibit high sensitivity to ACh and nicotine and are predominantly expressed in only a few brain areas, including dopaminergic neurons, norepirephrine neurons and cells of the visual system. nAChrs containing CHRNA6 subunits mediate endogenous cholinergic modulation of dopamine and gamma-aminobutyric acid (GABA) release in response to nicotine at nerve terminals. Also forms functional nAChRs with other subunits such as CHRNA7:CHRNB2, mainly expressed in basal forebrain cholinergic neurons. The sequence is that of Neuronal acetylcholine receptor subunit beta-2 (Chrnb2) from Rattus norvegicus (Rat).